The following is a 218-amino-acid chain: GEM-like protein 6 (218 aa).

The GRAM domain occupies 96 to 174; it reads KIYKRLFKVC…CKINGVNQSQ (79 aa).

It belongs to the GEM family.

This Arabidopsis thaliana (Mouse-ear cress) protein is GEM-like protein 6.